The chain runs to 192 residues: Fe/S biogenesis protein NfuA (192 aa).

[4Fe-4S] cluster contacts are provided by Cys-149 and Cys-152.

The protein belongs to the NfuA family. Homodimer. [4Fe-4S] cluster is required as a cofactor.

Involved in iron-sulfur cluster biogenesis. Binds a 4Fe-4S cluster, can transfer this cluster to apoproteins, and thereby intervenes in the maturation of Fe/S proteins. Could also act as a scaffold/chaperone for damaged Fe/S proteins. This is Fe/S biogenesis protein NfuA from Shewanella oneidensis (strain ATCC 700550 / JCM 31522 / CIP 106686 / LMG 19005 / NCIMB 14063 / MR-1).